The following is a 352-amino-acid chain: uncharacterized protein (352 aa).

Residues 1 to 22 (MIFKKTILIFIISFFFISISFA) form the signal peptide. Residues 25-47 (SSSSSSSSSSSSSSWSSSESSSS) are compositionally biased toward low complexity. Residues 25–49 (SSSSSSSSSSSSSSWSSSESSSSPA) form a disordered region. N-linked (GlcNAc...) asparagine glycosylation is found at asparagine 76, asparagine 110, asparagine 182, asparagine 212, and asparagine 223.

Its subcellular location is the secreted. This is an uncharacterized protein from Dictyostelium discoideum (Social amoeba).